Reading from the N-terminus, the 266-residue chain is Glucosamine-6-phosphate deaminase (266 aa).

The active-site Proton acceptor; for enolization step is the Asp72. Residue Asp141 is the For ring-opening step of the active site. The active-site Proton acceptor; for ring-opening step is the His143. Residue Glu148 is the For ring-opening step of the active site.

The protein belongs to the glucosamine/galactosamine-6-phosphate isomerase family. NagB subfamily. In terms of assembly, homohexamer.

The enzyme catalyses alpha-D-glucosamine 6-phosphate + H2O = beta-D-fructose 6-phosphate + NH4(+). It functions in the pathway amino-sugar metabolism; N-acetylneuraminate degradation; D-fructose 6-phosphate from N-acetylneuraminate: step 5/5. Allosterically activated by N-acetylglucosamine 6-phosphate (GlcNAc6P). In terms of biological role, catalyzes the reversible isomerization-deamination of glucosamine 6-phosphate (GlcN6P) to form fructose 6-phosphate (Fru6P) and ammonium ion. The sequence is that of Glucosamine-6-phosphate deaminase from Vibrio vulnificus (strain CMCP6).